The primary structure comprises 387 residues: Formate-dependent phosphoribosylglycinamide formyltransferase (387 aa).

Residues 21–22 and Glu81 contribute to the N(1)-(5-phospho-beta-D-ribosyl)glycinamide site; that span reads EL. Residues Arg113, Lys154, 159-164, 193-196, and Glu201 each bind ATP; these read SSGHGQ and EEFI. Residues 118–306 enclose the ATP-grasp domain; the sequence is TFAAEEVGVK…EFALHLRAVL (189 aa). Mg(2+) is bound by residues Glu265 and Glu277. N(1)-(5-phospho-beta-D-ribosyl)glycinamide contacts are provided by residues Asp284, Lys352, and 359-360; that span reads RR.

Belongs to the PurK/PurT family. As to quaternary structure, homodimer.

The enzyme catalyses N(1)-(5-phospho-beta-D-ribosyl)glycinamide + formate + ATP = N(2)-formyl-N(1)-(5-phospho-beta-D-ribosyl)glycinamide + ADP + phosphate + H(+). It functions in the pathway purine metabolism; IMP biosynthesis via de novo pathway; N(2)-formyl-N(1)-(5-phospho-D-ribosyl)glycinamide from N(1)-(5-phospho-D-ribosyl)glycinamide (formate route): step 1/1. Functionally, involved in the de novo purine biosynthesis. Catalyzes the transfer of formate to 5-phospho-ribosyl-glycinamide (GAR), producing 5-phospho-ribosyl-N-formylglycinamide (FGAR). Formate is provided by PurU via hydrolysis of 10-formyl-tetrahydrofolate. The sequence is that of Formate-dependent phosphoribosylglycinamide formyltransferase from Wolinella succinogenes (strain ATCC 29543 / DSM 1740 / CCUG 13145 / JCM 31913 / LMG 7466 / NCTC 11488 / FDC 602W) (Vibrio succinogenes).